The chain runs to 172 residues: Acetolactate synthase small subunit (172 aa).

The region spanning 4–78 is the ACT domain; the sequence is TLSVLVEDEA…NILKVDNITE (75 aa).

Belongs to the acetolactate synthase small subunit family. As to quaternary structure, dimer of large and small chains.

The protein resides in the plastid. Its subcellular location is the chloroplast. It catalyses the reaction 2 pyruvate + H(+) = (2S)-2-acetolactate + CO2. It functions in the pathway amino-acid biosynthesis; L-isoleucine biosynthesis; L-isoleucine from 2-oxobutanoate: step 1/4. Its pathway is amino-acid biosynthesis; L-valine biosynthesis; L-valine from pyruvate: step 1/4. The sequence is that of Acetolactate synthase small subunit (ilvH) from Cyanidium caldarium (Red alga).